We begin with the raw amino-acid sequence, 153 residues long: Large ribosomal subunit protein uL30 (153 aa).

This sequence belongs to the universal ribosomal protein uL30 family. Part of the 50S ribosomal subunit.

The sequence is that of Large ribosomal subunit protein uL30 from Methanosarcina barkeri (strain Fusaro / DSM 804).